The sequence spans 272 residues: Tryptophan synthase alpha chain (272 aa).

Active-site proton acceptor residues include Glu-49 and Asp-60.

It belongs to the TrpA family. In terms of assembly, tetramer of two alpha and two beta chains.

It carries out the reaction (1S,2R)-1-C-(indol-3-yl)glycerol 3-phosphate + L-serine = D-glyceraldehyde 3-phosphate + L-tryptophan + H2O. Its pathway is amino-acid biosynthesis; L-tryptophan biosynthesis; L-tryptophan from chorismate: step 5/5. In terms of biological role, the alpha subunit is responsible for the aldol cleavage of indoleglycerol phosphate to indole and glyceraldehyde 3-phosphate. The polypeptide is Tryptophan synthase alpha chain (Methylibium petroleiphilum (strain ATCC BAA-1232 / LMG 22953 / PM1)).